The sequence spans 438 residues: UPF0229 protein NGR_c12350 (438 aa).

The segment covering 1–16 (MPNFIDRRLNPKDKSL) has biased composition (basic and acidic residues). Disordered stretches follow at residues 1 to 20 (MPNF…GNRQ) and 83 to 107 (FAAG…GTGQ). The span at 94–105 (SGGGATGAGAGT) shows a compositional bias: gly residues.

Belongs to the UPF0229 family.

This is UPF0229 protein NGR_c12350 from Sinorhizobium fredii (strain NBRC 101917 / NGR234).